We begin with the raw amino-acid sequence, 232 residues long: MMAKVSKRMKEISAKINAEKKYPVSEAFDLLREVSSVKFVESVDVSVALGVDPRKSDQVVRGASVLPNGTGKTVRVAVFAKGPAADAAKEAGAEVVGMEDLADEVKKGNMDFDVVIASPDSMRVVGQLGQILGPKGLMPNPKIGTVTMDVAKAVRDAKAGQVRYRVDKAGIIHTTIGKVNFTSDALKQNLEQLLTDLKKAKPAVSKGIYLKKVSVSSTMGPGINVDFSDLNI.

It belongs to the universal ribosomal protein uL1 family. Part of the 50S ribosomal subunit.

Binds directly to 23S rRNA. The L1 stalk is quite mobile in the ribosome, and is involved in E site tRNA release. Functionally, protein L1 is also a translational repressor protein, it controls the translation of the L11 operon by binding to its mRNA. The sequence is that of Large ribosomal subunit protein uL1 from Francisella tularensis subsp. holarctica (strain LVS).